The following is a 189-amino-acid chain: UPF0301 protein PputGB1_5045 (189 aa).

Belongs to the UPF0301 (AlgH) family.

In Pseudomonas putida (strain GB-1), this protein is UPF0301 protein PputGB1_5045.